A 327-amino-acid chain; its full sequence is Methionine import ATP-binding protein MetN (327 aa).

In terms of domain architecture, ABC transporter spans 3 to 239; that stretch reads VELKNIEKIY…PKHAVTKELL (237 aa). 36–43 serves as a coordination point for ATP; sequence GYSGAGKS.

It belongs to the ABC transporter superfamily. Methionine importer (TC 3.A.1.24) family. As to quaternary structure, the complex is composed of two ATP-binding proteins (MetN), two transmembrane proteins (MetI) and a solute-binding protein (MetQ).

Its subcellular location is the cell inner membrane. The enzyme catalyses L-methionine(out) + ATP + H2O = L-methionine(in) + ADP + phosphate + H(+). The catalysed reaction is D-methionine(out) + ATP + H2O = D-methionine(in) + ADP + phosphate + H(+). Its function is as follows. Part of the ABC transporter complex MetNIQ involved in methionine import. Responsible for energy coupling to the transport system. The chain is Methionine import ATP-binding protein MetN from Helicobacter pylori (strain ATCC 700392 / 26695) (Campylobacter pylori).